A 309-amino-acid polypeptide reads, in one-letter code: Tagatose-6-phosphate kinase (309 aa).

The protein belongs to the carbohydrate kinase PfkB family. LacC subfamily.

The enzyme catalyses D-tagatofuranose 6-phosphate + ATP = D-tagatofuranose 1,6-bisphosphate + ADP + H(+). It participates in carbohydrate metabolism; D-tagatose 6-phosphate degradation; D-glyceraldehyde 3-phosphate and glycerone phosphate from D-tagatose 6-phosphate: step 1/2. The protein is Tagatose-6-phosphate kinase of Streptococcus pyogenes serotype M4 (strain MGAS10750).